A 100-amino-acid chain; its full sequence is Small ribosomal subunit protein uS14c (100 aa).

The protein belongs to the universal ribosomal protein uS14 family. Part of the 30S ribosomal subunit.

It localises to the plastid. The protein localises to the chloroplast. Functionally, binds 16S rRNA, required for the assembly of 30S particles. The polypeptide is Small ribosomal subunit protein uS14c (Adiantum capillus-veneris (Maidenhair fern)).